The primary structure comprises 109 residues: Nucleoid-associated protein VS_0917 (109 aa).

Disordered stretches follow at residues 1–22 (MFGK…ERMQ) and 88–109 (QKEK…KMPF). Residues 9 to 18 (NMMKQAQQMQ) show a composition bias toward low complexity.

It belongs to the YbaB/EbfC family. Homodimer.

It is found in the cytoplasm. Its subcellular location is the nucleoid. In terms of biological role, binds to DNA and alters its conformation. May be involved in regulation of gene expression, nucleoid organization and DNA protection. The protein is Nucleoid-associated protein VS_0917 of Vibrio atlanticus (strain LGP32) (Vibrio splendidus (strain Mel32)).